The primary structure comprises 3133 residues: Cysteine repeat modular protein A (3133 aa).

The disordered stretch occupies residues 1–39 (MDSASTSMSRVHPSGVYRRPLLPSGGPRSTSERDERVDL). Positions 30 to 39 (TSERDERVDL) are enriched in basic and acidic residues. Residues 123-143 (LFLLFSSSPLLLLLLLHQFFI) form a helical membrane-spanning segment. Composition is skewed to basic and acidic residues over residues 173–211 (TFEE…DGKE) and 301–311 (NESEKAERARL). Disordered stretches follow at residues 173–234 (TFEE…EGRR) and 294–317 (VSPS…STPA). Asn-301, Asn-392, and Asn-470 each carry an N-linked (GlcNAc...) asparagine glycan. Residues 577–644 (DETLEQGKLY…DPHVRFDFCD (68 aa)) enclose the Kringle domain. Disulfide bonds link Cys-599-Cys-631 and Cys-620-Cys-643. 2 N-linked (GlcNAc...) asparagine glycosylation sites follow: Asn-1364 and Asn-1532. 3 helical membrane-spanning segments follow: residues 2229–2249 (MVWN…FNIV), 2276–2296 (LTGI…PSWI), and 2339–2359 (VFYA…MSII). Asn-2369 carries N-linked (GlcNAc...) asparagine glycosylation. The next 3 helical transmembrane spans lie at 2420–2440 (AAKF…FVYS), 2489–2509 (VGIT…FLVL), and 2539–2559 (WEMV…VALI). An N-linked (GlcNAc...) asparagine glycan is attached at Asn-2565. The helical transmembrane segment at 2569-2589 (VWLAVVIAVIFLIIHLVTQPF) threads the bilayer. N-linked (GlcNAc...) asparagine glycosylation is present at Asn-2602. The next 2 helical transmembrane spans lie at 2607-2627 (IWTI…SGSV) and 2632-2652 (LLFV…SLMF). Composition is skewed to basic and acidic residues over residues 2827 to 2838 (FAAKDETPTAEE) and 3049 to 3069 (QEEN…DREI). Disordered regions lie at residues 2827–2847 (FAAK…DERL) and 3049–3101 (QEEN…LPEG). A coiled-coil region spans residues 2955–3068 (SEALQKRNRK…KEEREEADRE (114 aa)). The segment covering 3083–3094 (GEDDTATIDDSS) has biased composition (acidic residues).

In terms of assembly, component of a complex, at least composed of cysteine repeat modular protein A (CRMPa), cysteine repeat modular protein B (CRMPb), micronemal protein 15 (MIC15) and thrombospondin type 1 domain-containing protein (TSP1).

The protein localises to the cell membrane. Its subcellular location is the endoplasmic reticulum. The protein resides in the golgi apparatus. Functionally, required for triggering rhoptry secretion. Plays a role in host cell invasion. The polypeptide is Cysteine repeat modular protein A (Toxoplasma gondii).